The following is a 410-amino-acid chain: Alanine racemase (410 aa).

The RPE1 insert domain occupies Val28–Leu76. The Proton acceptor; specific for D-alanine role is filled by Lys83. Lys83 carries the post-translational modification N6-(pyridoxal phosphate)lysine. Arg182 contributes to the substrate binding site. The active-site Proton acceptor; specific for L-alanine is Tyr305. Met353 provides a ligand contact to substrate.

Belongs to the alanine racemase family. The cofactor is pyridoxal 5'-phosphate.

The catalysed reaction is L-alanine = D-alanine. Its pathway is amino-acid biosynthesis; D-alanine biosynthesis; D-alanine from L-alanine: step 1/1. Its function is as follows. Catalyzes the interconversion of L-alanine and D-alanine. May also act on other amino acids. The protein is Alanine racemase (alr) of Rickettsia bellii (strain RML369-C).